Consider the following 1330-residue polypeptide: Paired amphipathic helix protein Sin3-like 3 (1330 aa).

PAH domains follow at residues 8–78 and 94–164; these read QKLT…LPKG and KRVE…LPDT. Over residues 191 to 246 the composition is skewed to basic and acidic residues; that stretch reads IITPHPDHDYGTEHIDQDRERPIKKENKEHMRGTNKENEHRDARDFEPHSKKEQFL. The interval 191 to 281 is disordered; that stretch reads IITPHPDHDY…VPSSSTYDEK (91 aa). Positions 262–277 are enriched in polar residues; it reads ISNQSKLSGAVPSSST. One can recognise a PAH 3 domain in the interval 283–351; sequence AMKSYSQDLA…DSFIEFLVQC (69 aa). 5 disordered regions span residues 373–401, 718–775, 789–808, 882–906, and 920–1002; these read GEGK…DRDH, NQNV…GRTS, KNVV…SIER, QEMA…FEED, and SKAN…EAEC. Over residues 383-401 the composition is skewed to basic and acidic residues; it reads DNDRDQEHKRDDGLRDRDH. Residues 723–734 are compositionally biased toward low complexity; sequence SGSSSAGESEGS. Positions 789–800 are enriched in basic and acidic residues; sequence KNVVTSDEKPES. Positions 920–932 are enriched in polar residues; that stretch reads SKANDSTGNNISG. Composition is skewed to basic and acidic residues over residues 933 to 949 and 956 to 968; these read DRSR…RAEN and NAAR…RNEY. Over residues 980 to 989 the composition is skewed to acidic residues; the sequence is GGEDPEDDLD. S996 is subject to Phosphoserine.

Interacts with ERF7 and the histone deacetylase HDA19.

The protein resides in the nucleus. In terms of biological role, acts as a transcriptional repressor. Interacts with ERF7 to repress genes in abscisic acid and drought stress responses. The heterodimer represses transcription by tethering SNL3 to DNA. This chain is Paired amphipathic helix protein Sin3-like 3 (SNL3), found in Arabidopsis thaliana (Mouse-ear cress).